Consider the following 89-residue polypeptide: Small ribosomal subunit protein uS15 (89 aa).

Belongs to the universal ribosomal protein uS15 family. As to quaternary structure, part of the 30S ribosomal subunit. Forms a bridge to the 50S subunit in the 70S ribosome, contacting the 23S rRNA.

In terms of biological role, one of the primary rRNA binding proteins, it binds directly to 16S rRNA where it helps nucleate assembly of the platform of the 30S subunit by binding and bridging several RNA helices of the 16S rRNA. Its function is as follows. Forms an intersubunit bridge (bridge B4) with the 23S rRNA of the 50S subunit in the ribosome. The sequence is that of Small ribosomal subunit protein uS15 from Anoxybacillus flavithermus (strain DSM 21510 / WK1).